The primary structure comprises 621 residues: Chaperone protein HtpG (621 aa).

Residues Met1–Arg341 form an a; substrate-binding region. Residues Glu342–Asn547 are b. The c stretch occupies residues Trp548–Leu621.

It belongs to the heat shock protein 90 family. As to quaternary structure, homodimer.

Its subcellular location is the cytoplasm. Functionally, molecular chaperone. Has ATPase activity. This is Chaperone protein HtpG from Helicobacter pylori (strain ATCC 700392 / 26695) (Campylobacter pylori).